We begin with the raw amino-acid sequence, 466 residues long: Asparagine--tRNA ligase (466 aa).

This sequence belongs to the class-II aminoacyl-tRNA synthetase family. Homodimer.

It is found in the cytoplasm. The catalysed reaction is tRNA(Asn) + L-asparagine + ATP = L-asparaginyl-tRNA(Asn) + AMP + diphosphate + H(+). This chain is Asparagine--tRNA ligase, found in Enterobacter sp. (strain 638).